A 154-amino-acid polypeptide reads, in one-letter code: Large ribosomal subunit protein uL15 (154 aa).

The disordered stretch occupies residues 1–54 (MKLHDLTPAPGSRKPKKRVGRGPGGTDKTAGRGHKGQKSRSGAGKGPFFEGGRS).

The protein belongs to the universal ribosomal protein uL15 family. Part of the 50S ribosomal subunit.

In terms of biological role, binds to the 23S rRNA. In Deinococcus geothermalis (strain DSM 11300 / CIP 105573 / AG-3a), this protein is Large ribosomal subunit protein uL15.